Here is a 580-residue protein sequence, read N- to C-terminus: tRNA-guanine(15) transglycosylase (580 aa).

The active-site Nucleophile is Asp-91. Asp-126 and Ala-192 together coordinate substrate. Positions 275, 277, and 280 each coordinate Zn(2+). A PUA domain is found at 504-579 (RMRVVVDEDA…LAVKVRRGVE (76 aa)).

It belongs to the archaeosine tRNA-ribosyltransferase family. The cofactor is Zn(2+).

It carries out the reaction guanosine(15) in tRNA + 7-cyano-7-deazaguanine = 7-cyano-7-carbaguanosine(15) in tRNA + guanine. Its pathway is tRNA modification; archaeosine-tRNA biosynthesis. Functionally, exchanges the guanine residue with 7-cyano-7-deazaguanine (preQ0) at position 15 in the dihydrouridine loop (D-loop) of archaeal tRNAs. The protein is tRNA-guanine(15) transglycosylase of Thermococcus onnurineus (strain NA1).